Reading from the N-terminus, the 329-residue chain is Probable fructokinase-2 (329 aa).

This sequence belongs to the carbohydrate kinase PfkB family.

It carries out the reaction D-fructose + ATP = D-fructose 6-phosphate + ADP + H(+). It participates in glycan biosynthesis; starch biosynthesis. In terms of biological role, may play an important role in maintaining the flux of carbon towards starch formation. This Arabidopsis thaliana (Mouse-ear cress) protein is Probable fructokinase-2.